A 502-amino-acid chain; its full sequence is 2,3-bisphosphoglycerate-independent phosphoglycerate mutase (502 aa).

Mn(2+)-binding residues include D13 and S63. S63 serves as the catalytic Phosphoserine intermediate. Residues H117, 146–147 (RD), R177, R183, 251–254 (RSDR), and K324 each bind substrate. D389, H393, D430, H431, and H448 together coordinate Mn(2+).

Belongs to the BPG-independent phosphoglycerate mutase family. In terms of assembly, monomer. Mn(2+) is required as a cofactor.

The enzyme catalyses (2R)-2-phosphoglycerate = (2R)-3-phosphoglycerate. It functions in the pathway carbohydrate degradation; glycolysis; pyruvate from D-glyceraldehyde 3-phosphate: step 3/5. Functionally, catalyzes the interconversion of 2-phosphoglycerate and 3-phosphoglycerate. This chain is 2,3-bisphosphoglycerate-independent phosphoglycerate mutase, found in Ureaplasma urealyticum serovar 10 (strain ATCC 33699 / Western).